Here is a 180-residue protein sequence, read N- to C-terminus: Acireductone dioxygenase (180 aa).

H97, H99, E103, and H141 together coordinate Fe(2+). H97, H99, E103, and H141 together coordinate Ni(2+).

The protein belongs to the acireductone dioxygenase (ARD) family. Monomer. The cofactor is Fe(2+). Requires Ni(2+) as cofactor.

It carries out the reaction 1,2-dihydroxy-5-(methylsulfanyl)pent-1-en-3-one + O2 = 3-(methylsulfanyl)propanoate + CO + formate + 2 H(+). The catalysed reaction is 1,2-dihydroxy-5-(methylsulfanyl)pent-1-en-3-one + O2 = 4-methylsulfanyl-2-oxobutanoate + formate + 2 H(+). Its pathway is amino-acid biosynthesis; L-methionine biosynthesis via salvage pathway; L-methionine from S-methyl-5-thio-alpha-D-ribose 1-phosphate: step 5/6. Functionally, catalyzes 2 different reactions between oxygen and the acireductone 1,2-dihydroxy-3-keto-5-methylthiopentene (DHK-MTPene) depending upon the metal bound in the active site. Fe-containing acireductone dioxygenase (Fe-ARD) produces formate and 2-keto-4-methylthiobutyrate (KMTB), the alpha-ketoacid precursor of methionine in the methionine recycle pathway. Ni-containing acireductone dioxygenase (Ni-ARD) produces methylthiopropionate, carbon monoxide and formate, and does not lie on the methionine recycle pathway. In Klebsiella pneumoniae subsp. pneumoniae (strain ATCC 700721 / MGH 78578), this protein is Acireductone dioxygenase.